Reading from the N-terminus, the 383-residue chain is uncharacterized protein (383 aa).

10 helical membrane-spanning segments follow: residues 25-45, 53-73, 103-123, 139-159, 166-186, 200-220, 238-258, 272-292, 309-329, and 332-352; these read LWVA…PAVA, IYNV…PIMV, FTMV…LLTA, IAGC…MWGY, GLTL…YAPL, WQTI…AGIY, FLHY…ILLF, IFLI…ITYV, LIGA…LFGL, and GAAL…LMLV.

This sequence belongs to the arsenical resistance-3 (ACR3) (TC 2.A.59) family.

It localises to the cell membrane. This is an uncharacterized protein from Synechocystis sp. (strain ATCC 27184 / PCC 6803 / Kazusa).